A 258-amino-acid polypeptide reads, in one-letter code: Indole-3-glycerol phosphate synthase (258 aa).

It belongs to the TrpC family.

The catalysed reaction is 1-(2-carboxyphenylamino)-1-deoxy-D-ribulose 5-phosphate + H(+) = (1S,2R)-1-C-(indol-3-yl)glycerol 3-phosphate + CO2 + H2O. Its pathway is amino-acid biosynthesis; L-tryptophan biosynthesis; L-tryptophan from chorismate: step 4/5. The polypeptide is Indole-3-glycerol phosphate synthase (Geobacillus thermodenitrificans (strain NG80-2)).